The following is a 179-amino-acid chain: uncharacterized protein (179 aa).

Residues 5 to 25 (MLAGIGIGVAAALGVAAVASL) form a helical membrane-spanning segment.

The protein to Rickettsia 17 kDa surface antigen.

It localises to the membrane. This is an uncharacterized protein from Escherichia coli O6:H1 (strain CFT073 / ATCC 700928 / UPEC).